Consider the following 96-residue polypeptide: Small ribosomal subunit protein bS6 (96 aa).

It belongs to the bacterial ribosomal protein bS6 family.

Binds together with bS18 to 16S ribosomal RNA. In Streptococcus pyogenes serotype M1, this protein is Small ribosomal subunit protein bS6.